The following is a 180-amino-acid chain: ATP synthase subunit delta (180 aa).

It belongs to the ATPase delta chain family. In terms of assembly, F-type ATPases have 2 components, F(1) - the catalytic core - and F(0) - the membrane proton channel. F(1) has five subunits: alpha(3), beta(3), gamma(1), delta(1), epsilon(1). CF(0) has four main subunits: a(1), b(1), b'(1) and c(10-14). The alpha and beta chains form an alternating ring which encloses part of the gamma chain. F(1) is attached to F(0) by a central stalk formed by the gamma and epsilon chains, while a peripheral stalk is formed by the delta, b and b' chains.

It localises to the cellular thylakoid membrane. In terms of biological role, f(1)F(0) ATP synthase produces ATP from ADP in the presence of a proton or sodium gradient. F-type ATPases consist of two structural domains, F(1) containing the extramembraneous catalytic core and F(0) containing the membrane proton channel, linked together by a central stalk and a peripheral stalk. During catalysis, ATP synthesis in the catalytic domain of F(1) is coupled via a rotary mechanism of the central stalk subunits to proton translocation. Functionally, this protein is part of the stalk that links CF(0) to CF(1). It either transmits conformational changes from CF(0) to CF(1) or is implicated in proton conduction. The sequence is that of ATP synthase subunit delta from Synechococcus elongatus (strain ATCC 33912 / PCC 7942 / FACHB-805) (Anacystis nidulans R2).